Reading from the N-terminus, the 212-residue chain is Peptide methionine sulfoxide reductase MsrA (212 aa).

The active site involves Cys52.

It belongs to the MsrA Met sulfoxide reductase family.

The catalysed reaction is L-methionyl-[protein] + [thioredoxin]-disulfide + H2O = L-methionyl-(S)-S-oxide-[protein] + [thioredoxin]-dithiol. It catalyses the reaction [thioredoxin]-disulfide + L-methionine + H2O = L-methionine (S)-S-oxide + [thioredoxin]-dithiol. Its function is as follows. Has an important function as a repair enzyme for proteins that have been inactivated by oxidation. Catalyzes the reversible oxidation-reduction of methionine sulfoxide in proteins to methionine. This chain is Peptide methionine sulfoxide reductase MsrA, found in Salmonella paratyphi A (strain AKU_12601).